A 564-amino-acid chain; its full sequence is Heat shock factor protein 2 (564 aa).

A DNA-binding region spans residues 21–126; that stretch reads VPAFLSKLWA…LLEHIKRKVS (106 aa). The segment at 133-206 is hydrophobic repeat HR-A/B; that stretch reads NKISQEDLSK…VTLVQNNQLV (74 aa). The span at 271–280 shows a compositional bias: acidic residues; it reads EENTMVDEEN. Disordered regions lie at residues 271–301 and 320–347; these read EENTMVDEENAPITPETNEDTTSDSSNCSRS and QGDKSTESVAVSANDPLSPVSDSTSPLM. The interval 390–415 is hydrophobic repeat HR-C; sequence LLDYLDSIDCSLEDFQAMLSGRQFSI. Residues 448–465 are compositionally biased toward polar residues; it reads TTKSNAGPAASQETQVSK. The disordered stretch occupies residues 448 to 468; that stretch reads TTKSNAGPAASQETQVSKPKS.

This sequence belongs to the HSF family. Homotrimer. Expressed in most tissues with the exceptions of blood and liver.

The protein resides in the cytoplasm. The protein localises to the nucleus. In terms of biological role, DNA-binding protein that specifically binds heat shock promoter elements (HSE) and activates transcription. HSF2 shows constitutive DNA binding activity, even without heat shock. This is Heat shock factor protein 2 (HSF2) from Gallus gallus (Chicken).